The primary structure comprises 422 residues: Tyrosine-protein kinase STYK1 (422 aa).

A helical membrane pass occupies residues 26–46 (VIIVPTLLVTIFLILLGVILW). The region spanning 114-384 (SEVLEQICSG…ELRLRLEAAI (271 aa)) is the Protein kinase domain. ATP-binding positions include 120 to 128 (ICSGSCGPI) and Lys147. Asp251 (proton acceptor) is an active-site residue.

This sequence belongs to the protein kinase superfamily. Tyr protein kinase family. Widely expressed. Highly expressed in brain, placenta and prostate. Expressed in tumor cells such as hepatoma cells L-02, cervix carcinoma cells HeLa, ovary cancer cells Ho8910 and chronic myelogenous leukemia cells K-562, but not in other tumor cells such as epidermoid carcinoma (A-431). Undetectable in most normal lung tissues, widely expressed in lung cancers.

It localises to the membrane. The enzyme catalyses L-tyrosyl-[protein] + ATP = O-phospho-L-tyrosyl-[protein] + ADP + H(+). Its function is as follows. Probable tyrosine protein-kinase, which has strong transforming capabilities on a variety of cell lines. When overexpressed, it can also induce tumor cell invasion as well as metastasis in distant organs. May act by activating both MAP kinase and phosphatidylinositol 3'-kinases (PI3K) pathways. The polypeptide is Tyrosine-protein kinase STYK1 (STYK1) (Homo sapiens (Human)).